A 269-amino-acid polypeptide reads, in one-letter code: Sororin (269 aa).

3 disordered regions span residues 1 to 39 (MSEG…IMKR), 56 to 110 (VNTG…PKIN), and 146 to 169 (SLNS…STPN). Positions 57-66 (NTGSQSTPKV) are enriched in polar residues. The KEN box motif lies at 85-87 (KEN). Residues 146–155 (SLNSSSSLYS) are compositionally biased toward low complexity. An FGF motif motif is present at residues 180–182 (FGF). Residues 247-269 (LDEWAAFMNAEFEEAEKFDLTVE) are C-terminal Sororin domain.

This sequence belongs to the sororin family. Interacts with the APC/C complex. Interacts with the chromatin-bound cohesin complex; the interaction is indirect, occurs after DNA replication and requires acetylation of the cohesin component smc3. Interacts (via the FGF motif) with pds5a and pds5b; the interaction is direct and prevents the interaction of pds5a with wapl. Post-translationally, ubiquitinated by the APC/C complex in G1, leading to its degradation.

It is found in the nucleus. It localises to the chromosome. The protein resides in the cytoplasm. In terms of biological role, regulator of sister chromatid cohesion in mitosis stabilizing cohesin complex association with chromatin. May antagonize the action of wapl which stimulates cohesin dissociation from chromatin. Cohesion ensures that chromosome partitioning is accurate in both meiotic and mitotic cells and plays an important role in DNA repair. Required for efficient DNA double-stranded break repair. In Xenopus laevis (African clawed frog), this protein is Sororin (cdca5-a).